A 492-amino-acid polypeptide reads, in one-letter code: 6-phosphogluconate dehydrogenase, decarboxylating (492 aa).

NADP(+)-binding positions include 13–18, 36–38, 78–80, and Asn106; these read GLAVMG, NRT, and VKA. Substrate is bound at residue Asn106. Ser107 is modified (phosphoserine). Residue 132-134 participates in substrate binding; that stretch reads SGG. The active-site Proton acceptor is the Lys187. 190-191 is a binding site for substrate; that stretch reads HN. Glu194 serves as the catalytic Proton donor. Residue Tyr195 participates in substrate binding. At Ser215 the chain carries Phosphoserine. Positions 264, 291, 449, and 455 each coordinate substrate.

This sequence belongs to the 6-phosphogluconate dehydrogenase family. Homodimer.

It carries out the reaction 6-phospho-D-gluconate + NADP(+) = D-ribulose 5-phosphate + CO2 + NADPH. It participates in carbohydrate degradation; pentose phosphate pathway; D-ribulose 5-phosphate from D-glucose 6-phosphate (oxidative stage): step 3/3. In terms of biological role, catalyzes the oxidative decarboxylation of 6-phosphogluconate to ribulose 5-phosphate and CO(2), with concomitant reduction of NADP to NADPH. The chain is 6-phosphogluconate dehydrogenase, decarboxylating from Schizosaccharomyces pombe (strain 972 / ATCC 24843) (Fission yeast).